The chain runs to 201 residues: MQTSPLLESLMEALRCLPGVGPKSAQRMAFQLLQRDRSGGMRLAQALTRAMSEIGHCADCRTFTEQEHCTICLNPRRQQNGQICVVESPADIHAIEQTGQFGGRYFVLMGHLSPMDGIGPGDIGLDLLEKRLSTEAISEVILATNPTVEGDATANYIGQMCGQYGILASRIAHGVPVGGELEMVDGTTLSHSLAGRNPIKY.

The segment at 57–72 (CADCRTFTEQEHCTIC) adopts a C4-type zinc-finger fold. Residues 81-176 (GQICVVESPA…LASRIAHGVP (96 aa)) enclose the Toprim domain.

This sequence belongs to the RecR family.

Functionally, may play a role in DNA repair. It seems to be involved in an RecBC-independent recombinational process of DNA repair. It may act with RecF and RecO. The polypeptide is Recombination protein RecR (Yersinia pestis bv. Antiqua (strain Antiqua)).